A 401-amino-acid polypeptide reads, in one-letter code: Calreticulin (401 aa).

The signal sequence occupies residues 1 to 18 (MRKELWLGLLLSSQAVLS). Residues Cys-103 and Cys-134 are joined by a disulfide bond. An alpha-D-glucoside contacts are provided by Tyr-107, Lys-109, Tyr-125, and Asp-132. A run of 7 repeats spans residues 187–198 (KESGTLEEDWEI), 206–217 (DPEDKKPADWVD), 223–234 (DPEDKKPEDWDK), 241–252 (DPDATQPDDWDE), 256–266 (GKWEAPMISNP), 270–280 (GEWKAKKIPNP), and 284–294 (GVWKPRDIPNP). The interval 187 to 252 (KESGTLEEDW…DATQPDDWDE (66 aa)) is 4 X approximate repeats. Composition is skewed to basic and acidic residues over residues 199–214 (LKPKTIPDPEDKKPAD) and 224–236 (PEDKKPEDWDKEP). The tract at residues 199 to 263 (LKPKTIPDPE…EDGKWEAPMI (65 aa)) is disordered. Residues 246-256 (QPDDWDEEEDG) show a composition bias toward acidic residues. Positions 256–294 (GKWEAPMISNPKYKGEWKAKKIPNPAYKGVWKPRDIPNP) are 3 X approximate repeats. Residue Asp-314 participates in an alpha-D-glucoside binding. Positions 341–401 (DQTNGATKDA…EEEDDKKDEL (61 aa)) are disordered. Positions 348 to 381 (KDAEKKAFDSAEADKRKKEEDERKKQEEEEKKTA) are enriched in basic and acidic residues. The segment covering 382 to 401 (EEDEDDDDEEEEEDDKKDEL) has biased composition (acidic residues). The short motif at 398-401 (KDEL) is the Prevents secretion from ER element.

The protein belongs to the calreticulin family.

It is found in the endoplasmic reticulum lumen. In terms of biological role, molecular calcium-binding chaperone promoting folding, oligomeric assembly and quality control in the ER via the calreticulin/calnexin cycle. This lectin may interact transiently with almost all of the monoglucosylated glycoproteins that are synthesized in the ER. The sequence is that of Calreticulin from Euglena gracilis.